The sequence spans 89 residues: MIGSLKLSFVLALSLSVMHVLWCYPVLSSKVPGKPDYFLILLSSCPARLEGSDRLAFLKPILEKTSMKRSFRNGVGSGAKKTSFRRAKQ.

The first 23 residues, 1 to 23 (MIGSLKLSFVLALSLSVMHVLWC), serve as a signal peptide directing secretion. The propeptide occupies 24–69 (YPVLSSKVPGKPDYFLILLSSCPARLEGSDRLAFLKPILEKTSMKR).

It is found in the secreted. Functionally, may play an important anorexigenic role. Modulates arousal and anxiety as well as increases locomotor activity. Binds to its receptor NPSR1 with nanomolar affinity to increase intracellular calcium concentrations. The sequence is that of Neuropeptide S (Nps) from Mus musculus (Mouse).